The following is a 420-amino-acid chain: 3-phosphoshikimate 1-carboxyvinyltransferase (420 aa).

3-phosphoshikimate is bound by residues Lys26, Ser27, and Arg31. Lys26 contributes to the phosphoenolpyruvate binding site. Positions 97 and 125 each coordinate phosphoenolpyruvate. 6 residues coordinate 3-phosphoshikimate: Ser170, Ser171, Gln172, Asp297, Asn320, and Lys324. Gln172 serves as a coordination point for phosphoenolpyruvate. Asp297 (proton acceptor) is an active-site residue. Residues Arg328, Arg375, and Lys400 each contribute to the phosphoenolpyruvate site.

This sequence belongs to the EPSP synthase family. In terms of assembly, monomer.

It is found in the cytoplasm. The catalysed reaction is 3-phosphoshikimate + phosphoenolpyruvate = 5-O-(1-carboxyvinyl)-3-phosphoshikimate + phosphate. The protein operates within metabolic intermediate biosynthesis; chorismate biosynthesis; chorismate from D-erythrose 4-phosphate and phosphoenolpyruvate: step 6/7. Its function is as follows. Catalyzes the transfer of the enolpyruvyl moiety of phosphoenolpyruvate (PEP) to the 5-hydroxyl of shikimate-3-phosphate (S3P) to produce enolpyruvyl shikimate-3-phosphate and inorganic phosphate. The sequence is that of 3-phosphoshikimate 1-carboxyvinyltransferase from Rhizobium etli (strain ATCC 51251 / DSM 11541 / JCM 21823 / NBRC 15573 / CFN 42).